Reading from the N-terminus, the 212-residue chain is FMN-dependent NADH:quinone oxidoreductase (212 aa).

FMN-binding positions include Ser-9, 15 to 17 (SVS), and 138 to 141 (TRGG).

The protein belongs to the azoreductase type 1 family. Homodimer. FMN serves as cofactor.

The enzyme catalyses 2 a quinone + NADH + H(+) = 2 a 1,4-benzosemiquinone + NAD(+). It carries out the reaction N,N-dimethyl-1,4-phenylenediamine + anthranilate + 2 NAD(+) = 2-(4-dimethylaminophenyl)diazenylbenzoate + 2 NADH + 2 H(+). In terms of biological role, quinone reductase that provides resistance to thiol-specific stress caused by electrophilic quinones. Its function is as follows. Also exhibits azoreductase activity. Catalyzes the reductive cleavage of the azo bond in aromatic azo compounds to the corresponding amines. This chain is FMN-dependent NADH:quinone oxidoreductase, found in Delftia acidovorans (strain DSM 14801 / SPH-1).